The chain runs to 1050 residues: MADRGSFGFAPRLDIKQLLSEAQHRWLRPAEICEILRNHQKFHIASEPPNRPPSGSLFLFDRKVLRYFRKDGHNWRKKKDGKTVKEAHEKLKVGSIDVLHCYYAHGEDNENFQRRCYWMLEQDLMHIVFVHYLEVKGNRMSTSGTKENHSNSLSGTGSVNVDSTATRSSILSPLCEDADSGDSRQASSSLQQNPEPQTVVPQIMHHQNASTINSYNTTSVLGNRDGWTSAHGNRVKGSNSQRSGDVPAWDASFENSLARYQNLPYNAPLTQTQPSTFGLIPMEGKTEKGSLLTSEHLRNPLQSQVNWQTPVQESVPLQKWPMDSHSGMTDATDLALFGQGAHENFGTFSSLLGSQDQQSSSFQAPFTNNEAAYIPKLGPEDLIYEASANQTLPLRKALLKKEDSLKKVDSFSRWVSKELGEMEDLQMQSSSGGIAWTSVECENAAAGSSLSPSLSEDQRFTMIDFWPKWTQTDSEVEVMVIGTFLLSPQEVTSYSWSCMFGEVEVPADILVDGVLCCHAPPHEVGRVPFYITCSDRFSCSEVREFDFLPGSTRKLNATDIYGANTIETSLHLRFENLLALRCSVQEHHIFENVGEKRRKISKIMLLKDEKEPPLPGTIEKDLTELEAKERLIREEFEDKLYLWLIHKVTEEGKGPNILDEDGQGVLHLAAALGYDWAIKPILAAGVSINFRDANGWSALHWAAFSGREDTVAVLVSLGADAGALADPSPEHPLGKTAADLAYGNGHRGISGFLAESSLTSYLEKLTVDAKENSSADSSGAKAVLTVAERTATPMSYGDVPETLSMKDSLTAVLNATQAADRLHQVFRMQSFQRKQLSELGGDNKFDISDELAVSFAAAKTKKSGHSSGAVHAAAVQIQKKYRGWKKRKEFLLIRQRIVKIQAHVRGHQVRKQYRAIIWSVGLLEKIILRWRRKGSGLRGFKRDTISKPTEPVCPAPQEDDYDFLKEGRKQTEERLQKALTRVKSMAQYPEARAQYRRLLTVVEGFRENEASSSSALKNNTEEAANYNEEDDLIDIDSLLDDDTFMSLAFE.

A DNA-binding region (CG-1) is located at residues 15–141; sequence IKQLLSEAQH…YLEVKGNRMS (127 aa). Composition is skewed to polar residues over residues 141–171 and 183–196; these read STSGTKENHSNSLSGTGSVNVDSTATRSSIL and SRQASSSLQQNPEP. 2 disordered regions span residues 141 to 196 and 223 to 246; these read STSG…NPEP and NRDGWTSAHGNRVKGSNSQRSGDV. ANK repeat units follow at residues 661–690 and 694–723; these read DGQGVLHLAAALGYDWAIKPILAAGVSINF and NGWSALHWAAFSGREDTVAVLVSLGADAGA. 2 IQ domains span residues 870–899 and 893–922; these read VHAAAVQIQKKYRGWKKRKEFLLIRQRIVK and IRQRIVKIQAHVRGHQVRKQYRAIIWSVGL. A calmodulin-binding region spans residues 918 to 940; sequence WSVGLLEKIILRWRRKGSGLRGF. Residues 957–985 are a coiled coil; sequence QEDDYDFLKEGRKQTEERLQKALTRVKSM. S984 bears the Phosphoserine mark.

Belongs to the CAMTA family. Expressed in roots, stems, old leaves, petals, sepals, top of carpels, stigmas, stamen filaments, anthers and siliques, but not in pollen.

The protein localises to the nucleus. Transcription activator that binds to the DNA consensus sequence 5'-[ACG]CGCG[GTC]-3'. Regulates transcriptional activity in response to calcium signals. Binds calmodulin in a calcium-dependent manner. Involved in freezing tolerance in association with CAMTA1 and CAMTA3. Contributes together with CAMTA1 and CAMTA3 to the positive regulation of the cold-induced expression of DREB1A/CBF3, DREB1B/CBF1 and DREB1C/CBF2. Involved together with CAMTA3 and CAMTA4 in the positive regulation of a general stress response. Involved in tolerance to aluminum. Binds to the promoter of ALMT1 transporter and contributes to the positive regulation of aluminum-induced expression of ALMT1. The sequence is that of Calmodulin-binding transcription activator 2 from Arabidopsis thaliana (Mouse-ear cress).